The sequence spans 419 residues: 3-isopropylmalate dehydratase large subunit (419 aa).

Residues cysteine 300, cysteine 360, and cysteine 363 each contribute to the [4Fe-4S] cluster site.

The protein belongs to the aconitase/IPM isomerase family. LeuC type 2 subfamily. As to quaternary structure, heterodimer of LeuC and LeuD. [4Fe-4S] cluster serves as cofactor.

It catalyses the reaction (2R,3S)-3-isopropylmalate = (2S)-2-isopropylmalate. It participates in amino-acid biosynthesis; L-leucine biosynthesis; L-leucine from 3-methyl-2-oxobutanoate: step 2/4. Catalyzes the isomerization between 2-isopropylmalate and 3-isopropylmalate, via the formation of 2-isopropylmaleate. The chain is 3-isopropylmalate dehydratase large subunit from Nitratidesulfovibrio vulgaris (strain DP4) (Desulfovibrio vulgaris).